A 116-amino-acid polypeptide reads, in one-letter code: Large ribosomal subunit protein uL18 (116 aa).

This sequence belongs to the universal ribosomal protein uL18 family. In terms of assembly, part of the 50S ribosomal subunit; part of the 5S rRNA/L5/L18/L25 subcomplex. Contacts the 5S and 23S rRNAs.

This is one of the proteins that bind and probably mediate the attachment of the 5S RNA into the large ribosomal subunit, where it forms part of the central protuberance. In Shewanella loihica (strain ATCC BAA-1088 / PV-4), this protein is Large ribosomal subunit protein uL18.